The sequence spans 454 residues: Methylenetetrahydrofolate--tRNA-(uracil-5-)-methyltransferase TrmFO (454 aa).

An FAD-binding site is contributed by 9–14 (GAGLAG). The tract at residues 432 to 454 (LERVSPPSRETGEPTGAEQVDLA) is disordered.

Belongs to the MnmG family. TrmFO subfamily. It depends on FAD as a cofactor.

Its subcellular location is the cytoplasm. It catalyses the reaction uridine(54) in tRNA + (6R)-5,10-methylene-5,6,7,8-tetrahydrofolate + NADH + H(+) = 5-methyluridine(54) in tRNA + (6S)-5,6,7,8-tetrahydrofolate + NAD(+). The enzyme catalyses uridine(54) in tRNA + (6R)-5,10-methylene-5,6,7,8-tetrahydrofolate + NADPH + H(+) = 5-methyluridine(54) in tRNA + (6S)-5,6,7,8-tetrahydrofolate + NADP(+). In terms of biological role, catalyzes the folate-dependent formation of 5-methyl-uridine at position 54 (M-5-U54) in all tRNAs. The protein is Methylenetetrahydrofolate--tRNA-(uracil-5-)-methyltransferase TrmFO of Pelobacter propionicus (strain DSM 2379 / NBRC 103807 / OttBd1).